Here is a 568-residue protein sequence, read N- to C-terminus: Urease subunit alpha (568 aa).

The Urease domain occupies 130–568 (GGIDTHIHFI…LPMAQRYFLF (439 aa)). Ni(2+) is bound by residues H135, H137, and K218. Residue K218 is modified to N6-carboxylysine. H220 provides a ligand contact to substrate. H247 and H273 together coordinate Ni(2+). H321 (proton donor) is an active-site residue. D361 contacts Ni(2+).

The protein belongs to the metallo-dependent hydrolases superfamily. Urease alpha subunit family. As to quaternary structure, heterotrimer of UreA (gamma), UreB (beta) and UreC (alpha) subunits. Three heterotrimers associate to form the active enzyme. It depends on Ni cation as a cofactor. Post-translationally, carboxylation allows a single lysine to coordinate two nickel ions.

Its subcellular location is the cytoplasm. The catalysed reaction is urea + 2 H2O + H(+) = hydrogencarbonate + 2 NH4(+). The protein operates within nitrogen metabolism; urea degradation; CO(2) and NH(3) from urea (urease route): step 1/1. This chain is Urease subunit alpha, found in Burkholderia orbicola (strain MC0-3).